A 247-amino-acid chain; its full sequence is Ribosomal RNA large subunit methyltransferase E (247 aa).

Residues methionine 1 to alanine 21 are disordered. The segment covering serine 8–proline 17 has biased composition (basic and acidic residues). S-adenosyl-L-methionine-binding residues include glycine 80, tryptophan 82, aspartate 108, aspartate 124, and aspartate 153. The Proton acceptor role is filled by lysine 193.

Belongs to the class I-like SAM-binding methyltransferase superfamily. RNA methyltransferase RlmE family.

It localises to the cytoplasm. It carries out the reaction uridine(2552) in 23S rRNA + S-adenosyl-L-methionine = 2'-O-methyluridine(2552) in 23S rRNA + S-adenosyl-L-homocysteine + H(+). Functionally, specifically methylates the uridine in position 2552 of 23S rRNA at the 2'-O position of the ribose in the fully assembled 50S ribosomal subunit. In Polaromonas sp. (strain JS666 / ATCC BAA-500), this protein is Ribosomal RNA large subunit methyltransferase E.